A 435-amino-acid polypeptide reads, in one-letter code: Manganese transport system membrane protein MntC (435 aa).

Helical transmembrane passes span 17 to 37, 42 to 62, 68 to 88, 98 to 118, 143 to 163, 166 to 186, 189 to 209, 228 to 248, and 255 to 275; these read VLAG…FVLL, LIGD…FLFT, PFFL…IQLI, SAIG…LTYI, QDII…IVFF, FTLI…VRFL, LLAC…GVIL, LTGM…AGTL, and GMAT…FSMI.

Belongs to the ABC-3 integral membrane protein family. In terms of assembly, the complex is probably composed of two ATP-binding proteins (MntB), two transmembrane proteins (MntC and MntD) and a solute-binding protein (MntA).

The protein localises to the cell membrane. Its function is as follows. Probably part of the ABC transporter complex MntABCD involved in manganese import. Probably responsible for the translocation of the substrate across the membrane. This is Manganese transport system membrane protein MntC from Bacillus subtilis (strain 168).